A 580-amino-acid chain; its full sequence is Adenine deaminase 2 (580 aa).

It belongs to the metallo-dependent hydrolases superfamily. Adenine deaminase family. Mn(2+) serves as cofactor.

It catalyses the reaction adenine + H2O + H(+) = hypoxanthine + NH4(+). This Latilactobacillus sakei subsp. sakei (strain 23K) (Lactobacillus sakei subsp. sakei) protein is Adenine deaminase 2.